A 1208-amino-acid chain; its full sequence is DNA-directed RNA polymerase subunit beta (1208 aa).

Belongs to the RNA polymerase beta chain family. As to quaternary structure, the RNAP catalytic core consists of 2 alpha, 1 beta, 1 beta' and 1 omega subunit. When a sigma factor is associated with the core the holoenzyme is formed, which can initiate transcription.

It carries out the reaction RNA(n) + a ribonucleoside 5'-triphosphate = RNA(n+1) + diphosphate. In terms of biological role, DNA-dependent RNA polymerase catalyzes the transcription of DNA into RNA using the four ribonucleoside triphosphates as substrates. The polypeptide is DNA-directed RNA polymerase subunit beta (Enterococcus faecium (Streptococcus faecium)).